The chain runs to 303 residues: Aspartate carbamoyltransferase catalytic subunit (303 aa).

Carbamoyl phosphate is bound by residues Arg-48 and Thr-49. Residue Lys-76 coordinates L-aspartate. Carbamoyl phosphate is bound by residues Arg-98, His-129, and Gln-132. Positions 162 and 214 each coordinate L-aspartate. Ala-257 and Pro-258 together coordinate carbamoyl phosphate.

This sequence belongs to the aspartate/ornithine carbamoyltransferase superfamily. ATCase family. As to quaternary structure, heterododecamer (2C3:3R2) of six catalytic PyrB chains organized as two trimers (C3), and six regulatory PyrI chains organized as three dimers (R2).

The catalysed reaction is carbamoyl phosphate + L-aspartate = N-carbamoyl-L-aspartate + phosphate + H(+). The protein operates within pyrimidine metabolism; UMP biosynthesis via de novo pathway; (S)-dihydroorotate from bicarbonate: step 2/3. Its function is as follows. Catalyzes the condensation of carbamoyl phosphate and aspartate to form carbamoyl aspartate and inorganic phosphate, the committed step in the de novo pyrimidine nucleotide biosynthesis pathway. This Leuconostoc citreum (strain KM20) protein is Aspartate carbamoyltransferase catalytic subunit.